Here is a 183-residue protein sequence, read N- to C-terminus: MSRLWVTGYRSYELSIFSDQDPKLKVIQNALKRKLIEKVESGTTWIIAGPQLGTEQWSLELANELKMDYPELQTALMFPFSDFGKQWKEEKVEKLALIKAKVDFFANVSENPYQNPQQLRNYQNFMLNHTDEALLLYDDEHEGKTKFDLNAIRSFQEHNSYNVETIDFYDLEEESMLYEEKDE.

Belongs to the UPF0398 family.

The protein is UPF0398 protein PEPE_0933 of Pediococcus pentosaceus (strain ATCC 25745 / CCUG 21536 / LMG 10740 / 183-1w).